The primary structure comprises 208 residues: Small ribosomal subunit protein uS9c (208 aa).

The N-terminal 51 residues, 1–51 (MAVSISSLTSSFASLSFTSNLTPKPQTLPMARTKPFSLSNPAVVKPLVITA), are a transit peptide targeting the chloroplast. Thr-52 is modified (N-acetylthreonine). The segment at 185 to 208 (DSRIVERKKPGLKKARKAPQFSKR) is disordered. Over residues 194-208 (PGLKKARKAPQFSKR) the composition is skewed to basic residues.

As to quaternary structure, component of the chloroplast small ribosomal subunit (SSU). Mature 70S chloroplast ribosomes of higher plants consist of a small (30S) and a large (50S) subunit. The 30S small subunit contains 1 molecule of ribosomal RNA (16S rRNA) and 24 different proteins. The 50S large subunit contains 3 rRNA molecules (23S, 5S and 4.5S rRNA) and 33 different proteins. uS9c binds directly to 16S ribosomal RNA. uS9c interacts with translation factor pY (PSRP1).

Its subcellular location is the plastid. The protein localises to the chloroplast. Functionally, component of the chloroplast ribosome (chloro-ribosome), a dedicated translation machinery responsible for the synthesis of chloroplast genome-encoded proteins, including proteins of the transcription and translation machinery and components of the photosynthetic apparatus. The sequence is that of Small ribosomal subunit protein uS9c (PRPS9) from Spinacia oleracea (Spinach).